We begin with the raw amino-acid sequence, 269 residues long: Formamidopyrimidine-DNA glycosylase (269 aa).

The active-site Schiff-base intermediate with DNA is proline 2. Residue glutamate 3 is the Proton donor of the active site. The Proton donor; for beta-elimination activity role is filled by lysine 57. DNA contacts are provided by histidine 90, arginine 109, and lysine 150. An FPG-type zinc finger spans residues 235–269 (QVYGRKGEPCRVCGTPIVATKHAQRATFYCRHCQK). Arginine 259 acts as the Proton donor; for delta-elimination activity in catalysis.

Belongs to the FPG family. Monomer. Zn(2+) serves as cofactor.

The catalysed reaction is Hydrolysis of DNA containing ring-opened 7-methylguanine residues, releasing 2,6-diamino-4-hydroxy-5-(N-methyl)formamidopyrimidine.. The enzyme catalyses 2'-deoxyribonucleotide-(2'-deoxyribose 5'-phosphate)-2'-deoxyribonucleotide-DNA = a 3'-end 2'-deoxyribonucleotide-(2,3-dehydro-2,3-deoxyribose 5'-phosphate)-DNA + a 5'-end 5'-phospho-2'-deoxyribonucleoside-DNA + H(+). In terms of biological role, involved in base excision repair of DNA damaged by oxidation or by mutagenic agents. Acts as a DNA glycosylase that recognizes and removes damaged bases. Has a preference for oxidized purines, such as 7,8-dihydro-8-oxoguanine (8-oxoG). Has AP (apurinic/apyrimidinic) lyase activity and introduces nicks in the DNA strand. Cleaves the DNA backbone by beta-delta elimination to generate a single-strand break at the site of the removed base with both 3'- and 5'-phosphates. The polypeptide is Formamidopyrimidine-DNA glycosylase (Salmonella dublin (strain CT_02021853)).